A 138-amino-acid polypeptide reads, in one-letter code: Large ribosomal subunit protein uL16 (138 aa).

Positions 1–19 are enriched in basic residues; that stretch reads MLSPKRTKYRKAHKGRIHG. The disordered stretch occupies residues 1–21; it reads MLSPKRTKYRKAHKGRIHGNA.

The protein belongs to the universal ribosomal protein uL16 family. Part of the 50S ribosomal subunit.

Its function is as follows. Binds 23S rRNA and is also seen to make contacts with the A and possibly P site tRNAs. The protein is Large ribosomal subunit protein uL16 of Granulibacter bethesdensis (strain ATCC BAA-1260 / CGDNIH1).